Here is a 742-residue protein sequence, read N- to C-terminus: 5-methyltetrahydropteroyltriglutamate--homocysteine methyltransferase (742 aa).

Residues 18–21 (REWK) and Lys112 contribute to the 5-methyltetrahydropteroyltri-L-glutamate site. Residues 420–422 (IGS) and Glu473 contribute to the L-homocysteine site. L-methionine contacts are provided by residues 420 to 422 (IGS) and Glu473. Trp550 provides a ligand contact to 5-methyltetrahydropteroyltri-L-glutamate. Asp588 lines the L-homocysteine pocket. Position 588 (Asp588) interacts with L-methionine. Glu594 is a 5-methyltetrahydropteroyltri-L-glutamate binding site. Zn(2+) contacts are provided by His630, Cys632, and Glu654. His683 functions as the Proton donor in the catalytic mechanism. Residue Cys715 participates in Zn(2+) binding.

The protein belongs to the vitamin-B12 independent methionine synthase family. Requires Zn(2+) as cofactor.

The catalysed reaction is 5-methyltetrahydropteroyltri-L-glutamate + L-homocysteine = tetrahydropteroyltri-L-glutamate + L-methionine. It participates in amino-acid biosynthesis; L-methionine biosynthesis via de novo pathway; L-methionine from L-homocysteine (MetE route): step 1/1. In terms of biological role, catalyzes the transfer of a methyl group from 5-methyltetrahydrofolate to homocysteine resulting in methionine formation. This is 5-methyltetrahydropteroyltriglutamate--homocysteine methyltransferase from Staphylococcus aureus (strain JH9).